Here is a 392-residue protein sequence, read N- to C-terminus: Succinate--CoA ligase [ADP-forming] subunit beta (392 aa).

The region spanning 9–248 is the ATP-grasp domain; that stretch reads KGILKQFGVA…ITEEDPLEYE (240 aa). ATP contacts are provided by residues lysine 50, 57-59, glutamate 103, methionine 106, and glutamate 111; that span reads GRG. Asparagine 203 and aspartate 217 together coordinate Mg(2+). Residues asparagine 268 and 325–327 each bind substrate; that span reads GIV.

This sequence belongs to the succinate/malate CoA ligase beta subunit family. In terms of assembly, heterotetramer of two alpha and two beta subunits. It depends on Mg(2+) as a cofactor.

It carries out the reaction succinate + ATP + CoA = succinyl-CoA + ADP + phosphate. The enzyme catalyses GTP + succinate + CoA = succinyl-CoA + GDP + phosphate. The protein operates within carbohydrate metabolism; tricarboxylic acid cycle; succinate from succinyl-CoA (ligase route): step 1/1. Functionally, succinyl-CoA synthetase functions in the citric acid cycle (TCA), coupling the hydrolysis of succinyl-CoA to the synthesis of either ATP or GTP and thus represents the only step of substrate-level phosphorylation in the TCA. The beta subunit provides nucleotide specificity of the enzyme and binds the substrate succinate, while the binding sites for coenzyme A and phosphate are found in the alpha subunit. This is Succinate--CoA ligase [ADP-forming] subunit beta from Chlorobaculum parvum (strain DSM 263 / NCIMB 8327) (Chlorobium vibrioforme subsp. thiosulfatophilum).